We begin with the raw amino-acid sequence, 956 residues long: NKSRKRRNRESLLGAATVEPPKPIPLTWKTEKPVWVNQWPLPKQKLEALHLLANEQLEKGHIEPSFSPWNSPVFVIQKKSGKWRMLTDLRAVNAVIQPMGPLQPGLPSPAMIPKDWPLIIIDLKDCFFTIPLAEQDCEKFAFTIPAINNKEPATRFQWKVLPQGMLNSPTICQTFVGRALQPVREKFSDCYIIHCIDDILCAAETKDKLIDCYTFLQAEVANAGLAIASDKIQTSTPFHYLGMQIENRKIKPQKIEIRKDTLKTLNDFQKLLGDINWIRPTLGIPTYAMSNLFSILRGDSDLNSKRMLTPEATKEIKLVEEKIQSAQINRIDPLAPLQLLIFATAHSPTGIIIQNTDLVEWSFLPHSTVKTFTLYLDQIATLIGQTRLRIIKLCGNDPDKIVVPLTKEQVRQAFINSGAWKIGLANFVGIIDNHYPKTKIFQFLKLTTWILPKITRREPLENALTVFTDGSSNGKAAYTGPKERVIKTPYQSAQRAELVAVITVLQDFDQPINIISDSAYVVQATRDVETALIKYSMDDQLNQLFNLLQQTVRKRNFPFYITHIRAHTNLPGPLTKANEQADLLVSSALIKAQELHALTHVNAAGLKNKFDVTWKQAKDIVQHCTQCQVLHLPTQEAGVNPRGLCPNALWQMDVTHVPSFGRLSYVHVTVDTYSHFIWATCQTGESTSHVKKHLLSCFAVMGVPEKIKTDNGPGYCSKAFQKFLSQWKISHTTGIPYNSQGQAIVERTNRTLKTQLVKQKEGGDSKECTTPQMQLNLALYTLNFLNIYRNQTTTSAEQHLTGKKNSPHEGKLIWWKDNKNKTWEIGKVITWGRGFACVSPGENQLPVWIPTRHLKFYNEPIRDAKKSTSAETETSQSSTVDSQDEQNGDVRRTDEVAIHQEGRAANLGTTKEADAVSYKISREHKGDTNPREYAACSLDDCINGGKSPYACRSSCS.

A Reverse transcriptase domain is found at 57 to 245; the sequence is LEKGHIEPSF…TPFHYLGMQI (189 aa). Residues 161–164 carry the LPQG motif; it reads LPQG. The short motif at 195 to 198 is the YXDD element; the sequence is CIDD. The RNase H type-1 domain occupies 460–590; it reads LENALTVFTD…ADLLVSSALI (131 aa). Positions 469, 497, 517, and 582 each coordinate Mg(2+). The Integrase-type zinc finger occupies 587 to 628; it reads SALIKAQELHALTHVNAAGLKNKFDVTWKQAKDIVQHCTQCQ. H596, H600, C624, and C627 together coordinate Zn(2+). Residues 642-803 enclose the Integrase catalytic domain; sequence RGLCPNALWQ…TSAEQHLTGK (162 aa). A DNA-binding region (integrase-type) is located at residues 811-859; sequence KLIWWKDNKNKTWEIGKVITWGRGFACVSPGENQLPVWIPTRHLKFYNE. Positions 865–890 are disordered; it reads KKSTSAETETSQSSTVDSQDEQNGDV. The segment covering 869 to 879 has biased composition (low complexity); the sequence is SAETETSQSST.

It belongs to the beta type-B retroviral polymerase family. HERV class-II K(HML-2) pol subfamily. Post-translationally, cleavage sites that yield the mature proteins remain to be determined.

The catalysed reaction is DNA(n) + a 2'-deoxyribonucleoside 5'-triphosphate = DNA(n+1) + diphosphate. It carries out the reaction Endonucleolytic cleavage to 5'-phosphomonoester.. Functionally, early post-infection, the reverse transcriptase converts the viral RNA genome into double-stranded viral DNA. The RNase H domain of the reverse transcriptase performs two functions. It degrades the RNA template and specifically removes the RNA primer from the RNA/DNA hybrid. Following nuclear import, the integrase catalyzes the insertion of the linear, double-stranded viral DNA into the host cell chromosome. Endogenous Pol proteins may have kept, lost or modified their original function during evolution. This chain is Endogenous retrovirus group K member 6 Pol protein (ERVK-6), found in Homo sapiens (Human).